Here is a 253-residue protein sequence, read N- to C-terminus: MTKPHDFKTRAIIVRKTKCGEADRILSLLTPDLGLIQGFAKSVRKTKSKLSGHLELFCYSEVSLARGKAIDTVTGSQTIQSFLNIRSSLQLSAMAFYVCELAFHFSPEESANPAIFQLLLSTLEELDNTTQAELCTKYFEIHLLEMSGYKPELRECANCHQKLLATTNYFSPESGGIICPDCRNTQTGIPISVNAVKVLRYIQENDIPNIYRLKINREILSELELAIRANIRFVLEKEPKALLWLDSLSRANL.

The protein belongs to the RecO family.

In terms of biological role, involved in DNA repair and RecF pathway recombination. The sequence is that of DNA repair protein RecO from Dehalococcoides mccartyi (strain ATCC BAA-2266 / KCTC 15142 / 195) (Dehalococcoides ethenogenes (strain 195)).